Consider the following 1043-residue polypeptide: Phosphatidylinositol 4,5-bisphosphate 3-kinase catalytic subunit delta isoform (1043 aa).

One can recognise a PI3K-ABD domain in the interval 16–105 (ESQSVVVDFL…LPVLRLVARE (90 aa)). Residues 187–278 (NRALLVNVKF…GLTPHLTMVH (92 aa)) form the PI3K-RBD domain. The interval 287-312 (DEQSNPAPQVQKPRAKPPPIPAKKPS) is disordered. Residues 319–476 (LEQPFSIELI…SAAALVIYLP (158 aa)) form the C2 PI3K-type domain. The PIK helical domain occupies 496–673 (RHGERGRITE…GLIMEAYCRG (178 aa)). Position 523 is a phosphotyrosine (Tyr-523). The region spanning 744–1026 (CVEQCTFMDS…KFNEALRESW (283 aa)) is the PI3K/PI4K catalytic domain. The segment at 750 to 756 (FMDSKMK) is G-loop. The interval 889-897 (GIGDRHSDN) is catalytic loop. The activation loop stretch occupies residues 908 to 934 (HIDFGHFLGNFKTKFGINRERVPFILT). Ser-1038 is modified (phosphoserine; by autocatalysis).

It belongs to the PI3/PI4-kinase family. As to quaternary structure, heterodimer of a catalytic subunit PIK3CD and a p85 regulatory subunit (PIK3R1, PIK3R2 or PIK3R3). Interacts with ERAS and HRAS. Autophosphorylation on Ser-1038 results in the almost complete inactivation of the lipid kinase activity. In terms of tissue distribution, abundantly expressed in adult mouse spleen as well as in testis. Isoform 1 is expressed in spleen and lung (at protein level). Isoform 1 is expressed predominantly in leukocytes.

It localises to the cytoplasm. The catalysed reaction is a 1,2-diacyl-sn-glycero-3-phospho-(1D-myo-inositol-4,5-bisphosphate) + ATP = a 1,2-diacyl-sn-glycero-3-phospho-(1D-myo-inositol-3,4,5-trisphosphate) + ADP + H(+). The enzyme catalyses a 1,2-diacyl-sn-glycero-3-phospho-(1D-myo-inositol) + ATP = a 1,2-diacyl-sn-glycero-3-phospho-(1D-myo-inositol-3-phosphate) + ADP + H(+). It carries out the reaction 1-octadecanoyl-2-(5Z,8Z,11Z,14Z)-eicosatetraenoyl-sn-glycero-3-phospho-1D-myo-inositol 4,5-bisphosphate + ATP = 1-octadecanoyl-2-(5Z,8Z,11Z,14Z-eicosatetraenoyl)-sn-glycero-3-phospho-(1D-myo-inositol 3,4,5-triphosphate) + ADP + H(+). Its pathway is phospholipid metabolism; phosphatidylinositol phosphate biosynthesis. Activated by growth factors and cytokine receptors through a tyrosine-kinase-dependent mechanism. Activated by RAS. IC87114 inhibits lipid kinase activity and is selective in cells at doses up to 5-10 uM. Among other effects, IC87114 reduces allergic responses, prevents the recruitment of antigen-specific T cells into target tissue, and affects natural killer cell chemotaxis. Phosphoinositide-3-kinase (PI3K) phosphorylates phosphatidylinositol (PI) and its phosphorylated derivatives at position 3 of the inositol ring to produce 3-phosphoinositides. Uses ATP and PtdIns(4,5)P2 (phosphatidylinositol 4,5-bisphosphate) to generate phosphatidylinositol 3,4,5-trisphosphate (PIP3). PIP3 plays a key role by recruiting PH domain-containing proteins to the membrane, including AKT1 and PDPK1, activating signaling cascades involved in cell growth, survival, proliferation, motility and morphology. Mediates immune responses. Plays a role in B-cell development, proliferation, migration, and function. Required for B-cell receptor (BCR) signaling. Mediates B-cell proliferation response to anti-IgM, anti-CD40 and IL4 stimulation. Promotes cytokine production in response to TLR4 and TLR9. Required for antibody class switch mediated by TLR9. Involved in the antigen presentation function of B-cells. Involved in B-cell chemotaxis in response to CXCL13 and sphingosine 1-phosphate (S1P). Required for proliferation, signaling and cytokine production of naive, effector and memory T-cells. Required for T-cell receptor (TCR) signaling. Mediates TCR signaling events at the immune synapse. Activation by TCR leads to antigen-dependent memory T-cell migration and retention to antigenic tissues. Together with PIK3CG participates in T-cell development. Contributes to T-helper cell expansion and differentiation. Required for T-cell migration mediated by homing receptors SELL/CD62L, CCR7 and S1PR1 and antigen dependent recruitment of T-cells. Together with PIK3CG is involved in natural killer (NK) cell development and migration towards the sites of inflammation. Participates in NK cell receptor activation. Plays a role in NK cell maturation and cytokine production. Together with PIK3CG is involved in neutrophil chemotaxis and extravasation. Together with PIK3CG participates in neutrophil respiratory burst. Plays important roles in mast-cell development and mast cell mediated allergic response. Involved in stem cell factor (SCF)-mediated proliferation, adhesion and migration. Required for allergen-IgE-induced degranulation and cytokine release. The lipid kinase activity is required for its biological function. The chain is Phosphatidylinositol 4,5-bisphosphate 3-kinase catalytic subunit delta isoform (Pik3cd) from Mus musculus (Mouse).